The chain runs to 520 residues: NAD(P)H-quinone oxidoreductase subunit 2 (520 aa).

The next 14 membrane-spanning stretches (helical) occupy residues 15-35, 42-62, 79-99, 106-126, 132-152, 167-187, 210-230, 244-264, 280-300, 306-326, 334-354, 378-398, 400-420, and 466-486; these read ILPEGIVIVTLMGVLIVDLIL, WIGYLAIAGLLAAIVALYFQW, LSIIFRGIIALSAVVTILMSI, GTALAEFIAILLTATLGGMFV, LVMIFISLETLSISSYLLTGY, LLIGASSTAVFLYGVSLLYGL, LGAVIALVFVIAGIGFKISAA, PTPVIAFLSVGSKAAGFALAI, FVFTALAVLSMILGNVVALAQ, MLAYSSIAQAGFVMIGLIAGT, IFYLLVYLFMNLCGFTCIILF, LGLSISLLSLGGIPPLAGFFG, IYLFWAGWQAGLYWLVLLGLV, and VGLVLTLIATSVAGILSNPLF.

The protein belongs to the complex I subunit 2 family. NDH-1 can be composed of about 15 different subunits; different subcomplexes with different compositions have been identified which probably have different functions.

It is found in the cellular thylakoid membrane. The enzyme catalyses a plastoquinone + NADH + (n+1) H(+)(in) = a plastoquinol + NAD(+) + n H(+)(out). It catalyses the reaction a plastoquinone + NADPH + (n+1) H(+)(in) = a plastoquinol + NADP(+) + n H(+)(out). Its function is as follows. NDH-1 shuttles electrons from an unknown electron donor, via FMN and iron-sulfur (Fe-S) centers, to quinones in the respiratory and/or the photosynthetic chain. The immediate electron acceptor for the enzyme in this species is believed to be plastoquinone. Couples the redox reaction to proton translocation, and thus conserves the redox energy in a proton gradient. Cyanobacterial NDH-1 also plays a role in inorganic carbon-concentration. This is NAD(P)H-quinone oxidoreductase subunit 2 from Trichormus variabilis (strain ATCC 29413 / PCC 7937) (Anabaena variabilis).